Reading from the N-terminus, the 448-residue chain is Guanine deaminase (448 aa).

Positions 74 and 76 each coordinate Zn(2+). Residues 76–79 (HAPQ), 204–205 (RF), 231–234 (HISE), and Asp319 each bind substrate. 2 residues coordinate Zn(2+): His231 and Asp319.

The protein belongs to the metallo-dependent hydrolases superfamily. ATZ/TRZ family. It depends on Zn(2+) as a cofactor.

It catalyses the reaction guanine + H2O + H(+) = xanthine + NH4(+). It participates in purine metabolism; guanine degradation; xanthine from guanine: step 1/1. Its activity is regulated as follows. Strongly inhibited by p-chloromercuribenzoate (PCMB). Potassium cyanide (KCN) strongly inhibits activity towards 7,8-dihydropterin but has almost no effect on activity towards guanine. Pterin inhibits activity towards guanine but has little effect on activity towards 7,8-dihydropterin. In terms of biological role, catalyzes the hydrolytic deamination of guanine, producing xanthine and ammonia. Also has 7,8-dihydropterin deaminase activity, which plays a role in synthesis of the red eye pigment aurodrosopterin. This chain is Guanine deaminase, found in Drosophila melanogaster (Fruit fly).